We begin with the raw amino-acid sequence, 378 residues long: Ribosomal RNA large subunit methyltransferase G (378 aa).

The protein belongs to the methyltransferase superfamily. RlmG family.

The protein resides in the cytoplasm. It carries out the reaction guanosine(1835) in 23S rRNA + S-adenosyl-L-methionine = N(2)-methylguanosine(1835) in 23S rRNA + S-adenosyl-L-homocysteine + H(+). Its function is as follows. Specifically methylates the guanine in position 1835 (m2G1835) of 23S rRNA. The polypeptide is Ribosomal RNA large subunit methyltransferase G (Salmonella gallinarum (strain 287/91 / NCTC 13346)).